The following is a 449-amino-acid chain: Adenylosuccinate synthetase (449 aa).

GTP is bound by residues 12–18 (GDEGKGK) and 40–42 (GHT). The Proton acceptor role is filled by D13. Mg(2+) is bound by residues D13 and G40. IMP contacts are provided by residues 13 to 16 (DEGK), 38 to 41 (NAGH), T128, R142, Q223, T238, and R302. H41 (proton donor) is an active-site residue. 298–304 (TTTGRQR) provides a ligand contact to substrate. GTP contacts are provided by residues R304, 330–332 (KLD), and 412–414 (SLG).

The protein belongs to the adenylosuccinate synthetase family. As to quaternary structure, homodimer. Mg(2+) serves as cofactor.

It is found in the cytoplasm. The enzyme catalyses IMP + L-aspartate + GTP = N(6)-(1,2-dicarboxyethyl)-AMP + GDP + phosphate + 2 H(+). It functions in the pathway purine metabolism; AMP biosynthesis via de novo pathway; AMP from IMP: step 1/2. Its function is as follows. Plays an important role in the de novo pathway of purine nucleotide biosynthesis. Catalyzes the first committed step in the biosynthesis of AMP from IMP. The protein is Adenylosuccinate synthetase of Synechococcus sp. (strain JA-2-3B'a(2-13)) (Cyanobacteria bacterium Yellowstone B-Prime).